The following is a 1354-amino-acid chain: Rho-associated protein kinase 1 (1354 aa).

S2 carries the N-acetylserine modification. The 263-residue stretch at 76 to 338 (YEVVKVIGRG…VEEIKRHLFF (263 aa)) folds into the Protein kinase domain. ATP is bound by residues 82–90 (IGRGAFGEV) and K105. The active-site Proton acceptor is the D198. The region spanning 341 to 409 (DQWAWETLRD…YSNRRYLSPA (69 aa)) is the AGC-kinase C-terminal domain. The interaction with FHOD1 stretch occupies residues 368 to 727 (FDDLEEDKGD…KKLKEEREAR (360 aa)). The stretch at 422–692 (KSLQENLQKT…RLEQEVNEHK (271 aa)) forms a coiled coil. The REM-1 domain maps to 479–556 (STVSQIEKEK…LEEANDLLRT (78 aa)). Residues 707–946 (EAKSVAMCEM…AVSRLEETNS (240 aa)) are SHROOM3 binding. In terms of domain architecture, RhoBD spans 949 to 1015 (TKDIELLRKE…LAEIMNRKDF (67 aa)). Positions 998–1010 (LKTQAVNKLAEIM) are RHOA binding. The stretch at 1011–1102 (NRKDFKIDKK…KLSDLSDSTS (92 aa)) forms a coiled coil. The interval 1101–1120 (TSVASFPSADETDPNLPESR) is disordered. 2 positions are modified to phosphoserine: S1105 and S1108. The auto-inhibitory stretch occupies residues 1115 to 1354 (NLPESRIEGW…VVKNTSGKTS (240 aa)). Residues 1118–1317 (ESRIEGWLSV…WVTHLVKKIP (200 aa)) form the PH domain. A Phorbol-ester/DAG-type zinc finger spans residues 1228-1283 (GHEFIPTLYHFPANCEACAKPLWHVFKPPPALECRRCHVKCHRDHLDKKEDLISPC). S1328 carries the phosphoserine modification. Residues 1333–1354 (STRSTANQSFRKVVKNTSGKTS) are disordered.

The protein belongs to the protein kinase superfamily. AGC Ser/Thr protein kinase family. As to quaternary structure, homodimer. Interacts with RHOA (activated by GTP), RHOB, RHOC, GEM, MYLC2B, RHOE, PPP1R12A, LIMK1, LIMK2, TSG101, CHORDC1, DAPK3, PFN1, PTEN and JIP3. Interacts with FHOD1 in a Src-dependent manner. Interacts with ITGB1BP1 (via N-terminus and PTB domain). Interacts with SHROOM3. Mg(2+) is required as a cofactor. Autophosphorylated on serine and threonine residues. Post-translationally, cleaved by caspase-3 during apoptosis. This leads to constitutive activation of the kinase and membrane blebbing. In terms of tissue distribution, detected in corneal epithelium.

It is found in the cytoplasm. Its subcellular location is the cytoskeleton. The protein resides in the microtubule organizing center. The protein localises to the centrosome. It localises to the centriole. It is found in the golgi apparatus membrane. Its subcellular location is the cell projection. The protein resides in the bleb. The protein localises to the cell membrane. It localises to the lamellipodium. It is found in the ruffle. The enzyme catalyses L-seryl-[protein] + ATP = O-phospho-L-seryl-[protein] + ADP + H(+). The catalysed reaction is L-threonyl-[protein] + ATP = O-phospho-L-threonyl-[protein] + ADP + H(+). Activated by RHOA binding. Inhibited by Y-27632. Its function is as follows. Protein kinase which is a key regulator of the actin cytoskeleton and cell polarity. Involved in regulation of smooth muscle contraction, actin cytoskeleton organization, stress fiber and focal adhesion formation, neurite retraction, cell adhesion and motility via phosphorylation of DAPK3, GFAP, LIMK1, LIMK2, MYL9/MLC2, TPPP, PFN1 and PPP1R12A. Phosphorylates FHOD1 and acts synergistically with it to promote SRC-dependent non-apoptotic plasma membrane blebbing. Phosphorylates JIP3 and regulates the recruitment of JNK to JIP3 upon UVB-induced stress. Acts as a suppressor of inflammatory cell migration by regulating PTEN phosphorylation and stability. Acts as a negative regulator of VEGF-induced angiogenic endothelial cell activation. Required for centrosome positioning and centrosome-dependent exit from mitosis. Plays a role in terminal erythroid differentiation. Inhibits podocyte motility via regulation of actin cytoskeletal dynamics and phosphorylation of CFL1. Promotes keratinocyte terminal differentiation. Involved in osteoblast compaction through the fibronectin fibrillogenesis cell-mediated matrix assembly process, essential for osteoblast mineralization. May regulate closure of the eyelids and ventral body wall by inducing the assembly of actomyosin bundles. The sequence is that of Rho-associated protein kinase 1 (ROCK1) from Oryctolagus cuniculus (Rabbit).